Reading from the N-terminus, the 40-residue chain is MPPRRKRVSSAPRRRRRTYRRTTAHKHQERPVHRRRRRRH.

Residues 1 to 40 (MPPRRKRVSSAPRRRRRTYRRTTAHKHQERPVHRRRRRRH) form a disordered region.

As to expression, testis.

It is found in the nucleus. It localises to the chromosome. Protamines substitute for histones in the chromatin of sperm during the haploid phase of spermatogenesis. They compact sperm DNA into a highly condensed, stable and inactive complex. This chain is Protamine-2 (PBP2), found in Bufo japonicus (Japanese common toad).